We begin with the raw amino-acid sequence, 177 residues long: Adenine phosphoribosyltransferase (177 aa).

This sequence belongs to the purine/pyrimidine phosphoribosyltransferase family. Homodimer.

The protein resides in the cytoplasm. It catalyses the reaction AMP + diphosphate = 5-phospho-alpha-D-ribose 1-diphosphate + adenine. It participates in purine metabolism; AMP biosynthesis via salvage pathway; AMP from adenine: step 1/1. In terms of biological role, catalyzes a salvage reaction resulting in the formation of AMP, that is energically less costly than de novo synthesis. This Chlorobium phaeovibrioides (strain DSM 265 / 1930) (Prosthecochloris vibrioformis (strain DSM 265)) protein is Adenine phosphoribosyltransferase.